A 151-amino-acid polypeptide reads, in one-letter code: Probable cyclic pyranopterin monophosphate synthase (151 aa).

Substrate is bound by residues 66–68 (MCH) and 102–103 (ME). D117 is a catalytic residue.

The protein belongs to the MoaC family. As to quaternary structure, homohexamer; trimer of dimers.

The catalysed reaction is (8S)-3',8-cyclo-7,8-dihydroguanosine 5'-triphosphate = cyclic pyranopterin phosphate + diphosphate. Its pathway is cofactor biosynthesis; molybdopterin biosynthesis. Catalyzes the conversion of (8S)-3',8-cyclo-7,8-dihydroguanosine 5'-triphosphate to cyclic pyranopterin monophosphate (cPMP). The polypeptide is Probable cyclic pyranopterin monophosphate synthase (Sulfurisphaera tokodaii (strain DSM 16993 / JCM 10545 / NBRC 100140 / 7) (Sulfolobus tokodaii)).